Consider the following 229-residue polypeptide: Large ribosomal subunit protein uL1 (229 aa).

The protein belongs to the universal ribosomal protein uL1 family. Part of the 50S ribosomal subunit.

Binds directly to 23S rRNA. The L1 stalk is quite mobile in the ribosome, and is involved in E site tRNA release. Functionally, protein L1 is also a translational repressor protein, it controls the translation of the L11 operon by binding to its mRNA. The protein is Large ribosomal subunit protein uL1 of Phenylobacterium zucineum (strain HLK1).